We begin with the raw amino-acid sequence, 240 residues long: Octanoyltransferase (240 aa).

Residues 31–216 (GQVGDTLLLL…HLCAVFDLEP (186 aa)) enclose the BPL/LPL catalytic domain. Substrate is bound by residues 76 to 83 (RGGGATYH), 145 to 147 (AIG), and 159 to 161 (GLA). Cys177 serves as the catalytic Acyl-thioester intermediate.

Belongs to the LipB family.

Its subcellular location is the cytoplasm. The catalysed reaction is octanoyl-[ACP] + L-lysyl-[protein] = N(6)-octanoyl-L-lysyl-[protein] + holo-[ACP] + H(+). It functions in the pathway protein modification; protein lipoylation via endogenous pathway; protein N(6)-(lipoyl)lysine from octanoyl-[acyl-carrier-protein]: step 1/2. Catalyzes the transfer of endogenously produced octanoic acid from octanoyl-acyl-carrier-protein onto the lipoyl domains of lipoate-dependent enzymes. Lipoyl-ACP can also act as a substrate although octanoyl-ACP is likely to be the physiological substrate. The chain is Octanoyltransferase from Roseiflexus sp. (strain RS-1).